Here is a 434-residue protein sequence, read N- to C-terminus: Glutamyl-tRNA reductase (434 aa).

Substrate is bound by residues threonine 49 to arginine 52, serine 109, glutamate 114 to glutamine 116, and glutamine 120. The Nucleophile role is filled by cysteine 50. NADP(+) is bound at residue glycine 189–cysteine 194.

Belongs to the glutamyl-tRNA reductase family. In terms of assembly, homodimer.

The catalysed reaction is (S)-4-amino-5-oxopentanoate + tRNA(Glu) + NADP(+) = L-glutamyl-tRNA(Glu) + NADPH + H(+). Its pathway is porphyrin-containing compound metabolism; protoporphyrin-IX biosynthesis; 5-aminolevulinate from L-glutamyl-tRNA(Glu): step 1/2. Its function is as follows. Catalyzes the NADPH-dependent reduction of glutamyl-tRNA(Glu) to glutamate 1-semialdehyde (GSA). This is Glutamyl-tRNA reductase from Trichlorobacter lovleyi (strain ATCC BAA-1151 / DSM 17278 / SZ) (Geobacter lovleyi).